The following is a 187-amino-acid chain: Elongation factor P (187 aa).

The protein belongs to the elongation factor P family.

The protein resides in the cytoplasm. The protein operates within protein biosynthesis; polypeptide chain elongation. Functionally, involved in peptide bond synthesis. Stimulates efficient translation and peptide-bond synthesis on native or reconstituted 70S ribosomes in vitro. Probably functions indirectly by altering the affinity of the ribosome for aminoacyl-tRNA, thus increasing their reactivity as acceptors for peptidyl transferase. This is Elongation factor P from Corynebacterium aurimucosum (strain ATCC 700975 / DSM 44827 / CIP 107346 / CN-1) (Corynebacterium nigricans).